We begin with the raw amino-acid sequence, 369 residues long: C2 calcium-dependent domain-containing protein 4A (369 aa).

Disordered stretches follow at residues 151–176 (PRAPGPATPAAPGCPRPPQDALARRP) and 197–240 (RSRR…PFPE). A compositionally biased stretch (pro residues) spans 153-168 (APGPATPAAPGCPRPP). Residues 220–237 (SQSPARAPSTSPPSSRVP) are compositionally biased toward low complexity. The region spanning 253–369 (AGDALRLAAE…ELSLGALLLL (117 aa)) is the C2 domain.

This sequence belongs to the C2CD4 family. Specifically expressed in endothelial cells.

Its subcellular location is the nucleus. May be involved in inflammatory process. May regulate cell architecture and adhesion. The protein is C2 calcium-dependent domain-containing protein 4A (C2CD4A) of Homo sapiens (Human).